Here is a 380-residue protein sequence, read N- to C-terminus: Chaperone protein DnaJ (380 aa).

The J domain maps to 5–70; that stretch reads DYYEILGVAK…QKRAAYDQYG (66 aa). The CR-type zinc-finger motif lies at 135 to 213; sequence GVSKEIRIPT…CHGHGRVEKS (79 aa). Residues cysteine 148, cysteine 151, cysteine 165, cysteine 168, cysteine 187, cysteine 190, cysteine 201, and cysteine 204 each contribute to the Zn(2+) site. CXXCXGXG motif repeat units follow at residues 148-155, 165-172, 187-194, and 201-208; these read CGVCHGSG, CSTCHGAG, CPTCHGRG, and CNACHGHG.

Belongs to the DnaJ family. Homodimer. The cofactor is Zn(2+).

Its subcellular location is the cytoplasm. Its function is as follows. Participates actively in the response to hyperosmotic and heat shock by preventing the aggregation of stress-denatured proteins and by disaggregating proteins, also in an autonomous, DnaK-independent fashion. Unfolded proteins bind initially to DnaJ; upon interaction with the DnaJ-bound protein, DnaK hydrolyzes its bound ATP, resulting in the formation of a stable complex. GrpE releases ADP from DnaK; ATP binding to DnaK triggers the release of the substrate protein, thus completing the reaction cycle. Several rounds of ATP-dependent interactions between DnaJ, DnaK and GrpE are required for fully efficient folding. Also involved, together with DnaK and GrpE, in the DNA replication of plasmids through activation of initiation proteins. This Erwinia tasmaniensis (strain DSM 17950 / CFBP 7177 / CIP 109463 / NCPPB 4357 / Et1/99) protein is Chaperone protein DnaJ.